Consider the following 250-residue polypeptide: UDP-2,3-diacylglucosamine hydrolase (250 aa).

Mn(2+) contacts are provided by aspartate 8, histidine 10, aspartate 41, asparagine 79, and histidine 114. 79–80 serves as a coordination point for substrate; it reads NR. 4 residues coordinate substrate: aspartate 122, serine 160, glutamine 167, and histidine 195. Mn(2+) contacts are provided by histidine 195 and histidine 197.

Belongs to the LpxH family. The cofactor is Mn(2+).

The protein localises to the cell inner membrane. It carries out the reaction UDP-2-N,3-O-bis[(3R)-3-hydroxytetradecanoyl]-alpha-D-glucosamine + H2O = 2-N,3-O-bis[(3R)-3-hydroxytetradecanoyl]-alpha-D-glucosaminyl 1-phosphate + UMP + 2 H(+). Its pathway is glycolipid biosynthesis; lipid IV(A) biosynthesis; lipid IV(A) from (3R)-3-hydroxytetradecanoyl-[acyl-carrier-protein] and UDP-N-acetyl-alpha-D-glucosamine: step 4/6. Functionally, hydrolyzes the pyrophosphate bond of UDP-2,3-diacylglucosamine to yield 2,3-diacylglucosamine 1-phosphate (lipid X) and UMP by catalyzing the attack of water at the alpha-P atom. Involved in the biosynthesis of lipid A, a phosphorylated glycolipid that anchors the lipopolysaccharide to the outer membrane of the cell. This Nitrosococcus oceani (strain ATCC 19707 / BCRC 17464 / JCM 30415 / NCIMB 11848 / C-107) protein is UDP-2,3-diacylglucosamine hydrolase.